The primary structure comprises 179 residues: Large ribosomal subunit protein uL6 (179 aa).

Belongs to the universal ribosomal protein uL6 family. In terms of assembly, part of the 50S ribosomal subunit.

Functionally, this protein binds to the 23S rRNA, and is important in its secondary structure. It is located near the subunit interface in the base of the L7/L12 stalk, and near the tRNA binding site of the peptidyltransferase center. This is Large ribosomal subunit protein uL6 from Crocosphaera subtropica (strain ATCC 51142 / BH68) (Cyanothece sp. (strain ATCC 51142)).